The following is a 449-amino-acid chain: UDP-N-acetylmuramoylalanine--D-glutamate ligase (449 aa).

118 to 124 (GTNGKTT) is an ATP binding site.

Belongs to the MurCDEF family.

Its subcellular location is the cytoplasm. The catalysed reaction is UDP-N-acetyl-alpha-D-muramoyl-L-alanine + D-glutamate + ATP = UDP-N-acetyl-alpha-D-muramoyl-L-alanyl-D-glutamate + ADP + phosphate + H(+). It participates in cell wall biogenesis; peptidoglycan biosynthesis. Cell wall formation. Catalyzes the addition of glutamate to the nucleotide precursor UDP-N-acetylmuramoyl-L-alanine (UMA). The chain is UDP-N-acetylmuramoylalanine--D-glutamate ligase from Staphylococcus haemolyticus (strain JCSC1435).